The following is a 203-amino-acid chain: Ras-like protein 1 (203 aa).

17 to 24 (GGGGVGKS) contacts GTP. The Effector region motif lies at 39 to 47 (YDPTIEDSY). GTP is bound by residues 64 to 68 (DTAGQ) and 123 to 126 (NKCD). Position 200 is a cysteine methyl ester (C200). A lipid anchor (S-farnesyl cysteine) is attached at C200. Residues 201–203 (ILM) constitute a propeptide, removed in mature form.

This sequence belongs to the small GTPase superfamily. Ras family.

It localises to the cell membrane. It catalyses the reaction GTP + H2O = GDP + phosphate + H(+). Its activity is regulated as follows. Alternates between an inactive form bound to GDP and an active form bound to GTP. Activated by a guanine nucleotide-exchange factor (GEF) and inactivated by a GTPase-activating protein (GAP). The protein is Ras-like protein 1 (RAS1) of Mucor circinelloides f. lusitanicus (Mucor racemosus var. lusitanicus).